Reading from the N-terminus, the 134-residue chain is Large-conductance mechanosensitive channel (134 aa).

The next 2 helical transmembrane spans lie at 16-36 and 81-101; these read VIDL…VTAL and GDFL…FIIV.

This sequence belongs to the MscL family. Homopentamer.

The protein localises to the cell inner membrane. Functionally, channel that opens in response to stretch forces in the membrane lipid bilayer. May participate in the regulation of osmotic pressure changes within the cell. In Xylella fastidiosa (strain M12), this protein is Large-conductance mechanosensitive channel.